We begin with the raw amino-acid sequence, 968 residues long: RNA polymerase-associated protein RapA (968 aa).

Residues 163–332 (EVGRRYAPRV…FARLRLLDPD (170 aa)) form the Helicase ATP-binding domain. 176–183 (DEVGLGKT) is an ATP binding site. The DEAH box motif lies at 278–281 (DEAH). A Helicase C-terminal domain is found at 491–655 (RVDWLIEFLK…EFAEDLLNVL (165 aa)).

The protein belongs to the SNF2/RAD54 helicase family. RapA subfamily. Interacts with the RNAP. Has a higher affinity for the core RNAP than for the holoenzyme. Its ATPase activity is stimulated by binding to RNAP.

In terms of biological role, transcription regulator that activates transcription by stimulating RNA polymerase (RNAP) recycling in case of stress conditions such as supercoiled DNA or high salt concentrations. Probably acts by releasing the RNAP, when it is trapped or immobilized on tightly supercoiled DNA. Does not activate transcription on linear DNA. Probably not involved in DNA repair. In Shewanella baltica (strain OS155 / ATCC BAA-1091), this protein is RNA polymerase-associated protein RapA.